Consider the following 224-residue polypeptide: Transcriptional regulatory protein TctD (224 aa).

The Response regulatory domain occupies 2-116 (RLLLAEDNRE…ELDARLRALL (115 aa)). Asp51 is subject to 4-aspartylphosphate. The segment at residues 121 to 219 (GQVHEVQQLG…LRGLGYVLER (99 aa)) is a DNA-binding region (ompR/PhoB-type).

Its function is as follows. Transcriptional activator of the tctI tricarboxylate transport system operon. This Salmonella typhimurium (strain SL1344) protein is Transcriptional regulatory protein TctD (tctD).